The following is a 343-amino-acid chain: MTDTAPTDITTATDITTATGAATGTGRGPAATARGHAALAKTQVLIEALPWLSRFQGATIVIKYGGNAMTEPALRAAFAADIVFLRYSGLRVVVVHGGGPQITAHLARLGVESTFVGGLRVTTPETMDVVRMVLLGQVNRDVVGLVNDHGPFAVGLSGEDANLFTARRRPAIVDGQEVDVGLVGDIVEVRAETVDALLDSGKVPVVASVARGIDGGVYNVNADTAAAELAVALGATKLVVLTDVEGLYADWPTSDEVLSELSITELEQLLPTLAAGMIPKMEACRRAVRGGVPQAHVLDGRVPHAVLLEIFTDDGIGTLITPDRDTANRVAPAAPTAYSGGRP.

Substrate-binding positions include 98-99 (GG), Arg120, and Asn219.

This sequence belongs to the acetylglutamate kinase family. ArgB subfamily.

The protein resides in the cytoplasm. The catalysed reaction is N-acetyl-L-glutamate + ATP = N-acetyl-L-glutamyl 5-phosphate + ADP. It functions in the pathway amino-acid biosynthesis; L-arginine biosynthesis; N(2)-acetyl-L-ornithine from L-glutamate: step 2/4. Its function is as follows. Catalyzes the ATP-dependent phosphorylation of N-acetyl-L-glutamate. The sequence is that of Acetylglutamate kinase from Frankia alni (strain DSM 45986 / CECT 9034 / ACN14a).